The following is a 188-amino-acid chain: MKIGVLGVQGDVREHVEALHKLGVETLIVKLPEQLDMVDGLILPGGESTTMIRILKEMDMDEKLVERINEGLPVFATCAGVILLAKRIENYSQEKLGVLDITVERNAYGRQVESFETFVEIPAVGKDPFRAIFIRAPKIVETGKNVEILATYDYDPVLVKEGNILACTFHPELTDDLRLHRYFLEMVK.

Residue 46 to 48 (GES) participates in L-glutamine binding. Residue Cys78 is the Nucleophile of the active site. L-glutamine-binding positions include Arg105 and 134–135 (IR). Residues His170 and Glu172 each act as charge relay system in the active site.

Belongs to the glutaminase PdxT/SNO family. As to quaternary structure, in the presence of PdxS, forms a dodecamer of heterodimers. Only shows activity in the heterodimer.

The catalysed reaction is aldehydo-D-ribose 5-phosphate + D-glyceraldehyde 3-phosphate + L-glutamine = pyridoxal 5'-phosphate + L-glutamate + phosphate + 3 H2O + H(+). The enzyme catalyses L-glutamine + H2O = L-glutamate + NH4(+). The protein operates within cofactor biosynthesis; pyridoxal 5'-phosphate biosynthesis. Catalyzes the hydrolysis of glutamine to glutamate and ammonia as part of the biosynthesis of pyridoxal 5'-phosphate. The resulting ammonia molecule is channeled to the active site of PdxS. The polypeptide is Pyridoxal 5'-phosphate synthase subunit PdxT (Thermotoga petrophila (strain ATCC BAA-488 / DSM 13995 / JCM 10881 / RKU-1)).